The chain runs to 227 residues: Large ribosomal subunit protein uL1 (227 aa).

The protein belongs to the universal ribosomal protein uL1 family. Part of the 50S ribosomal subunit.

Functionally, binds directly to 23S rRNA. The L1 stalk is quite mobile in the ribosome, and is involved in E site tRNA release. Protein L1 is also a translational repressor protein, it controls the translation of the L11 operon by binding to its mRNA. In Mesoplasma florum (strain ATCC 33453 / NBRC 100688 / NCTC 11704 / L1) (Acholeplasma florum), this protein is Large ribosomal subunit protein uL1.